We begin with the raw amino-acid sequence, 183 residues long: Ribosome rescue factor SmrB (183 aa).

Positions 98–173 (LDLHGLTQLQ…GDAALLVLIE (76 aa)) constitute a Smr domain.

Belongs to the SmrB family. Associates with collided ribosomes, but not with correctly translating polysomes.

In terms of biological role, acts as a ribosome collision sensor. Detects stalled/collided disomes (pairs of ribosomes where the leading ribosome is stalled and a second ribosome has collided with it) and endonucleolytically cleaves mRNA at the 5' boundary of the stalled ribosome. Stalled/collided disomes form a new interface (primarily via the 30S subunits) that binds SmrB. Cleaved mRNA becomes available for tmRNA ligation, leading to ribosomal subunit dissociation and rescue of stalled ribosomes. The chain is Ribosome rescue factor SmrB from Salmonella arizonae (strain ATCC BAA-731 / CDC346-86 / RSK2980).